Here is a 336-residue protein sequence, read N- to C-terminus: tRNA (guanine(10)-N2)-dimethyltransferase (336 aa).

Positions 50–147 (KILKKRLAYA…NDRFILTRRL (98 aa)) constitute a THUMP domain.

It belongs to the methyltransferase superfamily. Trm-G10 family. Monomer.

Its subcellular location is the cytoplasm. It carries out the reaction guanosine(10) in tRNA + 2 S-adenosyl-L-methionine = N(2)-dimethylguanosine(10) in tRNA + 2 S-adenosyl-L-homocysteine + 2 H(+). Its function is as follows. Catalyzes the adenosylmethionine-dependent methylation of the exocyclic amino group (N(2)) of guanosine at position 10 of various tRNAs. Acts via a two-step process that leads to the formation of either N(2)-monomethyl (m(2)G) or N(2)-dimethylguanosine (m(2)(2)G). In Methanothermobacter thermautotrophicus (strain ATCC 29096 / DSM 1053 / JCM 10044 / NBRC 100330 / Delta H) (Methanobacterium thermoautotrophicum), this protein is tRNA (guanine(10)-N2)-dimethyltransferase (trmG10).